The sequence spans 334 residues: Holliday junction branch migration complex subunit RuvB (334 aa).

The large ATPase domain (RuvB-L) stretch occupies residues 1-182 (MDERLVSTEA…FGVHARLEYY (182 aa)). Residues Leu21, Arg22, Gly63, Lys66, Thr67, Thr68, 129–131 (EDF), Arg172, Tyr182, and Arg219 each bind ATP. Thr67 serves as a coordination point for Mg(2+). Positions 183–253 (EQRDLAHIVS…IAEDALERLQ (71 aa)) are small ATPAse domain (RuvB-S). Positions 256 to 334 (KLGLDHIDHK…HFQMEVPIRD (79 aa)) are head domain (RuvB-H). DNA contacts are provided by Arg311 and Arg316.

The protein belongs to the RuvB family. Homohexamer. Forms an RuvA(8)-RuvB(12)-Holliday junction (HJ) complex. HJ DNA is sandwiched between 2 RuvA tetramers; dsDNA enters through RuvA and exits via RuvB. An RuvB hexamer assembles on each DNA strand where it exits the tetramer. Each RuvB hexamer is contacted by two RuvA subunits (via domain III) on 2 adjacent RuvB subunits; this complex drives branch migration. In the full resolvosome a probable DNA-RuvA(4)-RuvB(12)-RuvC(2) complex forms which resolves the HJ.

It is found in the cytoplasm. The catalysed reaction is ATP + H2O = ADP + phosphate + H(+). The RuvA-RuvB-RuvC complex processes Holliday junction (HJ) DNA during genetic recombination and DNA repair, while the RuvA-RuvB complex plays an important role in the rescue of blocked DNA replication forks via replication fork reversal (RFR). RuvA specifically binds to HJ cruciform DNA, conferring on it an open structure. The RuvB hexamer acts as an ATP-dependent pump, pulling dsDNA into and through the RuvAB complex. RuvB forms 2 homohexamers on either side of HJ DNA bound by 1 or 2 RuvA tetramers; 4 subunits per hexamer contact DNA at a time. Coordinated motions by a converter formed by DNA-disengaged RuvB subunits stimulates ATP hydrolysis and nucleotide exchange. Immobilization of the converter enables RuvB to convert the ATP-contained energy into a lever motion, pulling 2 nucleotides of DNA out of the RuvA tetramer per ATP hydrolyzed, thus driving DNA branch migration. The RuvB motors rotate together with the DNA substrate, which together with the progressing nucleotide cycle form the mechanistic basis for DNA recombination by continuous HJ branch migration. Branch migration allows RuvC to scan DNA until it finds its consensus sequence, where it cleaves and resolves cruciform DNA. This chain is Holliday junction branch migration complex subunit RuvB, found in Bacillus pumilus (strain SAFR-032).